A 719-amino-acid chain; its full sequence is Protein psiI (719 aa).

The first 19 residues, 1 to 19 (MKIIFNLLILFSLVNFINS), serve as a signal peptide directing secretion. The Extracellular portion of the chain corresponds to 20–658 (QSTTQATTLK…ICQTGAIVST (639 aa)). N-linked (GlcNAc...) asparagine glycosylation is found at N62, N105, N118, N151, N315, N379, N454, N488, N500, N538, N592, and N629. The PA14 domain maps to 119-261 (LTLNPSTGTY…YDYCGVCYGD (143 aa)). The chain crosses the membrane as a helical span at residues 659-679 (AVVASVVVVGAVVLGAAIFAG). At 680-719 (KKGYDHWKANQGQVFASSNANPLYQQSNNGGENALFEAPQ) the chain is on the cytoplasmic side.

Belongs to the prespore-cell-inducing factor family.

The protein resides in the membrane. This is Protein psiI (psiI) from Dictyostelium discoideum (Social amoeba).